A 282-amino-acid chain; its full sequence is Putative hydrolase Bamb_4846 (282 aa).

Residues Glu-124, Glu-126, and Asp-155 each contribute to the Mg(2+) site.

Belongs to the FAH family. Mg(2+) is required as a cofactor.

This Burkholderia ambifaria (strain ATCC BAA-244 / DSM 16087 / CCUG 44356 / LMG 19182 / AMMD) (Burkholderia cepacia (strain AMMD)) protein is Putative hydrolase Bamb_4846.